Reading from the N-terminus, the 314-residue chain is tRNA dimethylallyltransferase (314 aa).

The tract at residues 1-25 (MAEEPQRSPAPTSPFAFTVPSNSLS) is disordered. Residue 40–47 (GPTASGKS) coordinates ATP. Residue 42–47 (TASGKS) coordinates substrate.

This sequence belongs to the IPP transferase family. In terms of assembly, monomer. Requires Mg(2+) as cofactor.

It catalyses the reaction adenosine(37) in tRNA + dimethylallyl diphosphate = N(6)-dimethylallyladenosine(37) in tRNA + diphosphate. In terms of biological role, catalyzes the transfer of a dimethylallyl group onto the adenine at position 37 in tRNAs that read codons beginning with uridine, leading to the formation of N6-(dimethylallyl)adenosine (i(6)A). This chain is tRNA dimethylallyltransferase, found in Cereibacter sphaeroides (strain ATCC 17023 / DSM 158 / JCM 6121 / CCUG 31486 / LMG 2827 / NBRC 12203 / NCIMB 8253 / ATH 2.4.1.) (Rhodobacter sphaeroides).